Consider the following 347-residue polypeptide: 4-hydroxy-2-oxovalerate aldolase 1 (347 aa).

The Pyruvate carboxyltransferase domain occupies 8–261 (VTLYDMSLLX…ETGIDLYKIM (254 aa)). Residue H20 is the Proton acceptor of the active site. Positions 171 and 200 each coordinate substrate. Positions 200 and 202 each coordinate Mn(2+). Y291 lines the substrate pocket.

Belongs to the 4-hydroxy-2-oxovalerate aldolase family.

The enzyme catalyses (S)-4-hydroxy-2-oxopentanoate = acetaldehyde + pyruvate. The polypeptide is 4-hydroxy-2-oxovalerate aldolase 1 (salH) (Metapseudomonas furukawaii (Pseudomonas furukawaii)).